The chain runs to 207 residues: Guanylate kinase (207 aa).

In terms of domain architecture, Guanylate kinase-like spans 3-181 (GLLFVVSAAS…ALHDLESVIT (179 aa)). Residue 10–17 (AASGTGKT) participates in ATP binding.

Belongs to the guanylate kinase family.

It localises to the cytoplasm. The catalysed reaction is GMP + ATP = GDP + ADP. Functionally, essential for recycling GMP and indirectly, cGMP. The polypeptide is Guanylate kinase (Acinetobacter baylyi (strain ATCC 33305 / BD413 / ADP1)).